Here is a 407-residue protein sequence, read N- to C-terminus: Arrestin domain-containing protein 2 (407 aa).

Belongs to the arrestin family. As to quaternary structure, interacts with WWP1 (via WW domains).

The protein is Arrestin domain-containing protein 2 (Arrdc2) of Mus musculus (Mouse).